The following is an 851-amino-acid chain: Venom phosphodiesterase 1 (851 aa).

Positions 1 to 23 (MIQQKVLFISLVAVTLGLGLGLG) are cleaved as a signal peptide. SMB domains are found at residues 30–73 (PQVS…VLPT) and 74–118 (QSWS…GETS). 16 disulfide bridges follow: cysteine 34–cysteine 38, cysteine 34–cysteine 51, cysteine 38–cysteine 69, cysteine 49–cysteine 51, cysteine 49–cysteine 62, cysteine 55–cysteine 61, cysteine 62–cysteine 69, cysteine 78–cysteine 83, cysteine 78–cysteine 95, cysteine 83–cysteine 113, cysteine 93–cysteine 95, cysteine 93–cysteine 106, cysteine 99–cysteine 105, cysteine 106–cysteine 113, cysteine 124–cysteine 170, and cysteine 132–cysteine 344. An N-linked (GlcNAc...) asparagine glycan is attached at asparagine 39. The Cell attachment site signature appears at 58–60 (RQA). A divalent metal cation-binding residues include aspartate 147 and threonine 185. The active-site AMP-threonine intermediate is the threonine 185. 3 N-linked (GlcNAc...) asparagine glycosylation sites follow: asparagine 216, asparagine 259, and asparagine 270. Lysine 271 is a binding site for AMP. 4 residues coordinate a divalent metal cation: aspartate 305, histidine 309, aspartate 352, and histidine 353. Residue histidine 309 participates in AMP binding. Cystine bridges form between cysteine 360–cysteine 457, cysteine 408–cysteine 793, cysteine 541–cysteine 599, cysteine 554–cysteine 654, cysteine 556–cysteine 639, and cysteine 762–cysteine 772. Asparagine 405 is a glycosylation site (N-linked (GlcNAc...) asparagine). Histidine 462 lines the a divalent metal cation pocket. Residues asparagine 512, asparagine 594, asparagine 674, and asparagine 745 are each glycosylated (N-linked (GlcNAc...) asparagine).

The protein belongs to the nucleotide pyrophosphatase/phosphodiesterase family. In terms of assembly, monomer cleaved in two subunits; disulfide-linked. Is synthesized as a single-chain protein and is subsequently cleaved to form a two-subunit protein held together with disulfide bonds. Requires a divalent metal cation as cofactor. As to expression, expressed by venom gland.

Its subcellular location is the secreted. It catalyses the reaction ADP + H2O = AMP + phosphate + H(+). In terms of biological role, hydrolyzes ADP with high activity. Shows weak or no activity on 5'-AMP, 5'-GMP, 3'-AMP, ATP, cAMP, and cGMP. Is devoid of monophosphatase and proteinase activities. Dose-dependently inhibits platelet aggregation induced by ADP and collagen. The chain is Venom phosphodiesterase 1 from Crotalus adamanteus (Eastern diamondback rattlesnake).